The chain runs to 148 residues: MKAVIILGLVLLSVTVQGKIFERCELARTLKRLGLDGYRGISLANWVCLAKWESDYNTQATNYNPGDQSTDYGIFQINSHYWCNNGKTPGAVNACHISCNALLQDNIADAVTCAKRVVRDPQGIRAWVAWRNHCHNRDVSQYVQGCGV.

An N-terminal signal peptide occupies residues 1–18 (MKAVIILGLVLLSVTVQG). The region spanning 19–148 (KIFERCELAR…VSQYVQGCGV (130 aa)) is the C-type lysozyme domain. 4 disulfide bridges follow: Cys-24–Cys-146, Cys-48–Cys-134, Cys-83–Cys-99, and Cys-95–Cys-113. Catalysis depends on residues Glu-53 and Asp-71.

It belongs to the glycosyl hydrolase 22 family. Monomer.

The protein localises to the secreted. It catalyses the reaction Hydrolysis of (1-&gt;4)-beta-linkages between N-acetylmuramic acid and N-acetyl-D-glucosamine residues in a peptidoglycan and between N-acetyl-D-glucosamine residues in chitodextrins.. Lysozymes have primarily a bacteriolytic function; those in tissues and body fluids are associated with the monocyte-macrophage system and enhance the activity of immunoagents. This is Lysozyme C (LYZ) from Miopithecus talapoin (Angolan talapoin).